The chain runs to 391 residues: Coiled-coil domain-containing protein 85C-A (391 aa).

2 coiled-coil regions span residues 23–87 (KCSK…ELCC) and 121–146 (FQQKLKELESNQDSVMRENLELKEII). The segment at 154-212 (NGAGSRSSIDSQSSLSNLNGGSATVRDVGDGSSTSSTGSAGSPDHHHSHIHKPTEGKIT) is disordered. 2 stretches are compositionally biased toward low complexity: residues 158–175 (SRSSIDSQSSLSNLNGGS) and 183–195 (DGSSTSSTGSAGS).

It belongs to the CCDC85 family.

Its subcellular location is the cell junction. The protein localises to the tight junction. The protein resides in the adherens junction. May play a role in cell-cell adhesion and epithelium development through its interaction with proteins of the beta-catenin family. May play an important role in cortical development, especially in the maintenance of radial glia. This Danio rerio (Zebrafish) protein is Coiled-coil domain-containing protein 85C-A (ccdc85ca).